Reading from the N-terminus, the 179-residue chain is MAKLHDYYKSSVVAELTKQFSYTSVMQVPRIEKITLNMGVGEAINDKKLLENAAADMATISGQKPLITKARKSVAGFKIREGYPIGCKVTLRGERMWEFLERLISIALPRVRDFRGVSAKSFDGRGNYSMGVREQIIFPEIDFDKVDRVRGLDITITTSAGTDEEGRALLAAFNFPFRK.

Belongs to the universal ribosomal protein uL5 family. As to quaternary structure, part of the 50S ribosomal subunit; part of the 5S rRNA/L5/L18/L25 subcomplex. Contacts the 5S rRNA and the P site tRNA. Forms a bridge to the 30S subunit in the 70S ribosome.

In terms of biological role, this is one of the proteins that bind and probably mediate the attachment of the 5S RNA into the large ribosomal subunit, where it forms part of the central protuberance. In the 70S ribosome it contacts protein S13 of the 30S subunit (bridge B1b), connecting the 2 subunits; this bridge is implicated in subunit movement. Contacts the P site tRNA; the 5S rRNA and some of its associated proteins might help stabilize positioning of ribosome-bound tRNAs. This Vibrio campbellii (strain ATCC BAA-1116) protein is Large ribosomal subunit protein uL5.